A 192-amino-acid polypeptide reads, in one-letter code: Protein A16 (192 aa).

An N-terminal signal peptide occupies residues 1–22 (MLLANTAAAVLLLIVCIGASVG). The region spanning 71 to 186 (KNKKFTIGTL…CLNPLNIFPY (116 aa)) is the C-type lectin domain. A disulfide bridge links Cys163 with Cys177.

As to expression, expressed in the gut of adults.

In Anopheles gambiae (African malaria mosquito), this protein is Protein A16 (CTL3).